Consider the following 68-residue polypeptide: METIIRRFSPKEKEKEKEKEEKDEKSKDKKEPIKTRSKSKNDEEEEEDEQELVQGKPKGNSKNIKTKK.

A disordered region spans residues 1–68; it reads METIIRRFSP…GNSKNIKTKK (68 aa). The span at 9–34 shows a compositional bias: basic and acidic residues; it reads SPKEKEKEKEKEEKDEKSKDKKEPIK. Acidic residues predominate over residues 42–51; it reads DEEEEEDEQE.

This is an uncharacterized protein from Dictyostelium discoideum (Social amoeba).